The chain runs to 199 residues: Chaperone protein TorD (199 aa).

It belongs to the TorD/DmsD family. TorD subfamily.

It localises to the cytoplasm. In terms of biological role, involved in the biogenesis of TorA. Acts on TorA before the insertion of the molybdenum cofactor and, as a result, probably favors a conformation of the apoenzyme that is competent for acquiring the cofactor. In Actinobacillus pleuropneumoniae serotype 3 (strain JL03), this protein is Chaperone protein TorD.